Here is a 319-residue protein sequence, read N- to C-terminus: Putative GPI-anchor transamidase (319 aa).

An N-terminal signal peptide occupies residues M1–A16. Active-site residues include H156 and C198. A glycan (N-linked (GlcNAc...) asparagine) is linked at N257.

Belongs to the peptidase C13 family.

It participates in glycolipid biosynthesis; glycosylphosphatidylinositol-anchor biosynthesis. In terms of biological role, mediates GPI anchoring in the endoplasmic reticulum, by replacing a protein's C-terminal GPI attachment signal peptide with a pre-assembled GPI. During this transamidation reaction, the GPI transamidase forms a carbonyl intermediate with the substrate protein. The chain is Putative GPI-anchor transamidase from Caenorhabditis elegans.